A 466-amino-acid polypeptide reads, in one-letter code: Cysteine--tRNA ligase (466 aa).

Cys-33 provides a ligand contact to Zn(2+). The short motif at 35–45 (PTVYDYAHIGN) is the 'HIGH' region element. Cys-221, His-246, and Glu-250 together coordinate Zn(2+). Positions 279–283 (KMSKS) match the 'KMSKS' region motif. Lys-282 is a binding site for ATP.

It belongs to the class-I aminoacyl-tRNA synthetase family. As to quaternary structure, monomer. It depends on Zn(2+) as a cofactor.

It localises to the cytoplasm. The enzyme catalyses tRNA(Cys) + L-cysteine + ATP = L-cysteinyl-tRNA(Cys) + AMP + diphosphate. The polypeptide is Cysteine--tRNA ligase (Rhizobium meliloti (strain 1021) (Ensifer meliloti)).